Here is a 192-residue protein sequence, read N- to C-terminus: UPF0312 protein Psyr_0457 (192 aa).

An N-terminal signal peptide occupies residues 1 to 23 (MLKKSLAALALGTALLSAGQAMA).

This sequence belongs to the UPF0312 family. Type 1 subfamily.

It localises to the periplasm. This Pseudomonas syringae pv. syringae (strain B728a) protein is UPF0312 protein Psyr_0457.